Here is a 204-residue protein sequence, read N- to C-terminus: Guanylate kinase (204 aa).

A Guanylate kinase-like domain is found at 3 to 181; sequence GTLYIVSAAS…AVSEMSAIFT (179 aa). Residue 10 to 17 participates in ATP binding; sequence AASGTGKS.

This sequence belongs to the guanylate kinase family.

It localises to the cytoplasm. It catalyses the reaction GMP + ATP = GDP + ADP. In terms of biological role, essential for recycling GMP and indirectly, cGMP. This chain is Guanylate kinase (gmk), found in Xylella fastidiosa (strain 9a5c).